We begin with the raw amino-acid sequence, 675 residues long: Probable potassium transport system protein Kup (675 aa).

Transmembrane regions (helical) follow at residues Leu12–Val32, Val55–Leu75, Trp98–Pro118, Trp143–Gly163, Ser170–Ile190, Met216–Ser236, Thr249–Leu269, Ile296–Gly316, Ile345–Phe365, Ala374–Val394, Phe401–Ser421, and Gly428–Phe448.

The protein belongs to the HAK/KUP transporter (TC 2.A.72) family.

Its subcellular location is the cell membrane. It carries out the reaction K(+)(in) + H(+)(in) = K(+)(out) + H(+)(out). Its function is as follows. Transport of potassium into the cell. Likely operates as a K(+):H(+) symporter. The protein is Probable potassium transport system protein Kup of Levilactobacillus brevis (strain ATCC 367 / BCRC 12310 / CIP 105137 / JCM 1170 / LMG 11437 / NCIMB 947 / NCTC 947) (Lactobacillus brevis).